Reading from the N-terminus, the 357-residue chain is 3-isopropylmalate dehydrogenase (357 aa).

Residues arginine 97, arginine 107, arginine 135, and aspartate 224 each contribute to the substrate site. The Mg(2+) site is built by aspartate 224, aspartate 248, and aspartate 252. 282–294 (GSAPDIAGQDKAN) contributes to the NAD(+) binding site.

Belongs to the isocitrate and isopropylmalate dehydrogenases family. LeuB type 1 subfamily. Homodimer. Mg(2+) is required as a cofactor. The cofactor is Mn(2+).

It is found in the cytoplasm. It carries out the reaction (2R,3S)-3-isopropylmalate + NAD(+) = 4-methyl-2-oxopentanoate + CO2 + NADH. It functions in the pathway amino-acid biosynthesis; L-leucine biosynthesis; L-leucine from 3-methyl-2-oxobutanoate: step 3/4. Catalyzes the oxidation of 3-carboxy-2-hydroxy-4-methylpentanoate (3-isopropylmalate) to 3-carboxy-4-methyl-2-oxopentanoate. The product decarboxylates to 4-methyl-2 oxopentanoate. This chain is 3-isopropylmalate dehydrogenase, found in Synechococcus sp. (strain CC9902).